Here is a 383-residue protein sequence, read N- to C-terminus: Ribosomal RNA large subunit methyltransferase G (383 aa).

This sequence belongs to the methyltransferase superfamily. RlmG family.

It localises to the cytoplasm. It carries out the reaction guanosine(1835) in 23S rRNA + S-adenosyl-L-methionine = N(2)-methylguanosine(1835) in 23S rRNA + S-adenosyl-L-homocysteine + H(+). Its function is as follows. Specifically methylates the guanine in position 1835 (m2G1835) of 23S rRNA. The protein is Ribosomal RNA large subunit methyltransferase G of Shewanella denitrificans (strain OS217 / ATCC BAA-1090 / DSM 15013).